The sequence spans 322 residues: Transaldolase (322 aa).

Lys-136 serves as the catalytic Schiff-base intermediate with substrate.

It belongs to the transaldolase family. Type 1 subfamily. As to quaternary structure, homodimer.

It localises to the cytoplasm. It carries out the reaction D-sedoheptulose 7-phosphate + D-glyceraldehyde 3-phosphate = D-erythrose 4-phosphate + beta-D-fructose 6-phosphate. It participates in carbohydrate degradation; pentose phosphate pathway; D-glyceraldehyde 3-phosphate and beta-D-fructose 6-phosphate from D-ribose 5-phosphate and D-xylulose 5-phosphate (non-oxidative stage): step 2/3. In terms of biological role, transaldolase is important for the balance of metabolites in the pentose-phosphate pathway. The sequence is that of Transaldolase from Xanthomonas oryzae pv. oryzae (strain MAFF 311018).